A 165-amino-acid chain; its full sequence is Destrin (165 aa).

At Ala-2 the chain carries N-acetylalanine. The residue at position 3 (Ser-3) is a Phosphoserine. One can recognise an ADF-H domain in the interval 4 to 153 (GVQVADEVCR…NRACIAEKLG (150 aa)). Position 19 is an N6-acetyllysine (Lys-19). A Nuclear localization signal motif is present at residues 30-34 (KKRKK).

This sequence belongs to the actin-binding proteins ADF family. ISGylated.

Functionally, actin-depolymerizing protein. Severs actin filaments (F-actin) and binds to actin monomers (G-actin). Acts in a pH-independent manner. This Bos taurus (Bovine) protein is Destrin (DSTN).